Consider the following 329-residue polypeptide: Protein STRICTOSIDINE SYNTHASE-LIKE 11 (329 aa).

The N-terminal stretch at 1-23 (MMRSFVSLISLLLLLSFSSSVLS) is a signal peptide. Asn37 and Asn79 each carry an N-linked (GlcNAc...) asparagine glycan.

This sequence belongs to the strictosidine synthase family.

It localises to the vacuole. It carries out the reaction 3alpha(S)-strictosidine + H2O = secologanin + tryptamine. The protein operates within alkaloid biosynthesis; 3alpha(S)-strictosidine biosynthesis; 3alpha(S)-strictosidine from secologanin and tryptamine: step 1/1. Functionally, catalyzes the stereospecific condensation of tryptamine with secologanin to form strictosidine, the key intermediate of indole alkaloid biosynthesis. The sequence is that of Protein STRICTOSIDINE SYNTHASE-LIKE 11 from Arabidopsis thaliana (Mouse-ear cress).